The chain runs to 57 residues: UPF0391 membrane protein HNE_2348 (57 aa).

2 helical membrane passes run 4–24 (WALT…GGIA) and 27–47 (AASI…ITFV).

The protein belongs to the UPF0391 family.

The protein resides in the cell membrane. The polypeptide is UPF0391 membrane protein HNE_2348 (Hyphomonas neptunium (strain ATCC 15444)).